Reading from the N-terminus, the 308-residue chain is Oxygen-dependent coproporphyrinogen-III oxidase (308 aa).

Substrate is bound at residue Ser-100. A divalent metal cation-binding residues include His-104 and His-114. The Proton donor role is filled by His-114. 116–118 provides a ligand contact to substrate; that stretch reads NFR. The a divalent metal cation site is built by His-153 and His-183. The segment at 248 to 283 is important for dimerization; that stretch reads YVEFNLVFDRGTIFGLQSGGRTESILSSMPPMATWK. Substrate is bound at residue 266–268; sequence GGR.

It belongs to the aerobic coproporphyrinogen-III oxidase family. As to quaternary structure, homodimer. A divalent metal cation is required as a cofactor.

The protein localises to the cytoplasm. It catalyses the reaction coproporphyrinogen III + O2 + 2 H(+) = protoporphyrinogen IX + 2 CO2 + 2 H2O. The protein operates within porphyrin-containing compound metabolism; protoporphyrin-IX biosynthesis; protoporphyrinogen-IX from coproporphyrinogen-III (O2 route): step 1/1. Involved in the heme biosynthesis. Catalyzes the aerobic oxidative decarboxylation of propionate groups of rings A and B of coproporphyrinogen-III to yield the vinyl groups in protoporphyrinogen-IX. The polypeptide is Oxygen-dependent coproporphyrinogen-III oxidase (Francisella tularensis subsp. holarctica (strain LVS)).